The sequence spans 398 residues: Nicotinate phosphoribosyltransferase (398 aa).

H214 carries the post-translational modification Phosphohistidine; by autocatalysis.

The protein belongs to the NAPRTase family. Transiently phosphorylated on a His residue during the reaction cycle. Phosphorylation strongly increases the affinity for substrates and increases the rate of nicotinate D-ribonucleotide production. Dephosphorylation regenerates the low-affinity form of the enzyme, leading to product release.

It carries out the reaction nicotinate + 5-phospho-alpha-D-ribose 1-diphosphate + ATP + H2O = nicotinate beta-D-ribonucleotide + ADP + phosphate + diphosphate. It participates in cofactor biosynthesis; NAD(+) biosynthesis; nicotinate D-ribonucleotide from nicotinate: step 1/1. In terms of biological role, catalyzes the synthesis of beta-nicotinate D-ribonucleotide from nicotinate and 5-phospho-D-ribose 1-phosphate at the expense of ATP. This Xanthomonas campestris pv. campestris (strain 8004) protein is Nicotinate phosphoribosyltransferase.